The chain runs to 1294 residues: Leucine-rich repeat receptor protein kinase MSP1 (1294 aa).

Residues 1-22 (MVSNSFWLFILLVSFIPISAWA) form the signal peptide. LRR repeat units follow at residues 88 to 112 (FQSLVRLNFSGCGFSGELPEALGNL), 113 to 136 (QNLQYLDLSNNELTGPIPISLYNL), 138 to 160 (MLKEMVLDYNSLSGQLSPAIAQL), 161 to 184 (QHLTKLSISMNSISGSLPPDLGSL), and 186 to 207 (NLELLDIKMNTFNGSIPATFGN). N-linked (GlcNAc...) asparagine glycans are attached at residues asparagine 198, asparagine 207, and asparagine 220. 23 LRR repeats span residues 232–256 (LTNLLTLDLSSNSFEGTIPREIGQL), 258–280 (NLELLILGKNDLTGRIPQEIGSL), 282–304 (QLKLLHLEECQFTGKIPWSISGL), 305–328 (SSLTELDISDNNFDAELPSSMGEL), 330–352 (NLTQLIAKNAGLSGNMPKELGNC), 353–376 (KKLTVINLSFNALIGPIPEEFADL), 378–400 (AIVSFFVEGNKLSGRVPDWIQKW), 401–422 (KNARSIRLGQNKFSGPLPVLPL), 423–446 (QHLLSFAAESNLLSGSIPSHICQA), 447–469 (NSLHSLLLHHNNLTGTIDEAFKG), 471–493 (TNLTELNLLDNHIHGEVPGYLAE), 494–517 (LPLVTLELSQNKFAGMLPAELWES), 519–541 (TLLEISLSNNEITGPIPESIGKL), 542–565 (SVLQRLHIDNNLLEGPIPQSVGDL), 566–589 (RNLTNLSLRGNRLSGIIPLALFNC), 591–613 (KLATLDLSYNNLTGNIPSAISHL), 614–637 (TLLDSLILSSNQLSGSIPAEICVG), 649–673 (LQHHGLLDLSYNQLTGQIPTSIKNC), 675–697 (MVMVLNLQGNLLNGTIPVELGEL), 698–721 (TNLTSINLSFNEFVGPMLPWSGPL), 722–745 (VQLQGLILSNNHLDGSIPAKIGQI), 746–770 (LPKIAVLDLSSNALTGTLPQSLLCN), and 772–794 (YLNHLDVSNNHLSGHIQFSCPDG). N-linked (GlcNAc...) asparagine glycans are attached at residues asparagine 330 and asparagine 359. 2 N-linked (GlcNAc...) asparagine glycosylation sites follow: asparagine 458 and asparagine 472. 3 N-linked (GlcNAc...) asparagine glycosylation sites follow: asparagine 567, asparagine 570, and asparagine 601. Asparagine 687, asparagine 699, and asparagine 704 each carry an N-linked (GlcNAc...) asparagine glycan. N-linked (GlcNAc...) asparagine glycans are attached at residues asparagine 805, asparagine 821, and asparagine 832. 2 LRR repeats span residues 822 to 846 (FTQLSTLDIHNNSLTGRLPSALSDL) and 848 to 870 (SLNYLDLSSNNLYGAIPCGICNI). Residues 917-937 (ITICAFTFVIIIVLVLLAVYL) form a helical membrane-spanning segment. Positions 1002–1282 (FSKVHIIGDG…KGLKMTHGME (281 aa)) constitute a Protein kinase domain. ATP contacts are provided by residues 1008 to 1016 (IGDGGFGTV) and lysine 1030. Aspartate 1129 (proton acceptor) is an active-site residue.

The protein belongs to the protein kinase superfamily. Ser/Thr protein kinase family. As to quaternary structure, interacts with TDL1A. As to expression, expressed in anthers and ovules during meiosis.

It is found in the cell membrane. It carries out the reaction L-seryl-[protein] + ATP = O-phospho-L-seryl-[protein] + ADP + H(+). The catalysed reaction is L-threonyl-[protein] + ATP = O-phospho-L-threonyl-[protein] + ADP + H(+). In terms of biological role, receptor-like kinase that plays important roles in restricting the number of cells entering into male and female sporogenesis. Involved in cell specification during anther development and initiation of anther wall formation. The protein is Leucine-rich repeat receptor protein kinase MSP1 of Oryza sativa subsp. japonica (Rice).